The primary structure comprises 1098 residues: Probable DNA-directed RNA polymerase (1098 aa).

The span at 1 to 24 (PIRESVRVSTDRDPDLEDEKREQL) shows a compositional bias: basic and acidic residues. The segment at 1 to 26 (PIRESVRVSTDRDPDLEDEKREQLGE) is disordered. Residues Asp663, Lys750, and Asp915 contribute to the active site.

Belongs to the phage and mitochondrial RNA polymerase family.

It localises to the mitochondrion. The enzyme catalyses RNA(n) + a ribonucleoside 5'-triphosphate = RNA(n+1) + diphosphate. DNA-dependent RNA polymerase catalyzes the transcription of DNA into RNA using the four ribonucleoside triphosphates as substrates. The chain is Probable DNA-directed RNA polymerase from Zea mays (Maize).